Consider the following 88-residue polypeptide: DNA-directed RNA polymerase subunit omega (88 aa).

This sequence belongs to the RNA polymerase subunit omega family. In terms of assembly, the RNAP catalytic core consists of 2 alpha, 1 beta, 1 beta' and 1 omega subunit. When a sigma factor is associated with the core the holoenzyme is formed, which can initiate transcription.

It carries out the reaction RNA(n) + a ribonucleoside 5'-triphosphate = RNA(n+1) + diphosphate. Promotes RNA polymerase assembly. Latches the N- and C-terminal regions of the beta' subunit thereby facilitating its interaction with the beta and alpha subunits. In Thermobifida fusca (strain YX), this protein is DNA-directed RNA polymerase subunit omega.